The primary structure comprises 487 residues: Protein translocase subunit SecY (487 aa).

The Cytoplasmic portion of the chain corresponds to 1-20 (MSWKDTAEPLLVRMPAVQRP). Residues 21 to 47 (EGHVPFKRKLTWTGGVLLLYFFLTNVK) traverse the membrane as a helical segment. Topologically, residues 48–59 (LFGLDIDASQQV) are extracellular. The segment at residues 60–67 (FGRFSSIL) is an intramembrane region (helical). Residues 60 to 88 (FGRFSSILASGQGSIMQLGIGPIVTASIV) traverse the membrane as a discontinuously helical segment. Residues 68 to 79 (ASGQGSIMQLGI) lie within the membrane without spanning it. Residues 80–88 (GPIVTASIV) constitute an intramembrane region (helical). Over 89–110 (LQLLGGADLLGLNTQDDPRDQI) the chain is Cytoplasmic. Residues 111-135 (LYQGLQKLLVLVMICLTGLPMVFAG) traverse the membrane as a helical segment. At 136–153 (GFLPADTAVANSLGIGTA) the chain is on the extracellular side. Residues 154–178 (GVQWLIFAQMFVGGVLILFMDEVIS) form a helical membrane-spanning segment. Residues 179–184 (KWGVGS) lie on the Cytoplasmic side of the membrane. Residues 185 to 203 (GIGLFIVAGVSQRLVGGLL) traverse the membrane as a helical segment. At 204–244 (TAPFLGNSEGIIYTWYLFITGERGTGPVLAADGLQTVLLQG) the chain is on the extracellular side. Residues 245–266 (ELLGLFTTVLIFAVVVYAESVR) traverse the membrane as a helical segment. The Cytoplasmic segment spans residues 267–291 (VEIPLSNARVKGARGRFPVKLIYAS). Residues 292-313 (VLPMILVRALQANIQFLGRILN) form a helical membrane-spanning segment. At 314-364 (AQLGSMPAFLGTYANGQPTGGLFYFLAPIQSRGDWMWWLEGTAQPVWQILT) the chain is on the extracellular side. Residues 365-384 (RVGIDLFVMLVGGAVFAVFW) form a helical membrane-spanning segment. The Cytoplasmic portion of the chain corresponds to 385–427 (VETTDMGPEATAKQIHNSGMQIPGFRQNVGVIEKVLERYIPQV). The helical transmembrane segment at 428-446 (TVIGGALVGLLAVMANMLG) threads the bilayer. Topologically, residues 447-451 (TIGGV) are extracellular. The helical transmembrane segment at 452–466 (SGTGLLLTVSITYKL) threads the bilayer. The Cytoplasmic portion of the chain corresponds to 467–487 (YEEIAEEQLMEMHPMMRQMFG).

This sequence belongs to the SecY/SEC61-alpha family. In terms of assembly, component of the Sec protein translocase complex. Heterotrimer consisting of alpha (SecY), beta (SecG) and gamma (SecE) subunits. The heterotrimers can form oligomers, although 1 heterotrimer is thought to be able to translocate proteins. Interacts with the ribosome. May interact with SecDF, and other proteins may be involved.

It localises to the cell membrane. In terms of biological role, the central subunit of the protein translocation channel SecYEG. Consists of two halves formed by TMs 1-5 and 6-10. These two domains form a lateral gate at the front which open onto the bilayer between TMs 2 and 7, and are clamped together by SecE at the back. The channel is closed by both a pore ring composed of hydrophobic SecY resides and a short helix (helix 2A) on the extracellular side of the membrane which forms a plug. The plug probably moves laterally to allow the channel to open. The ring and the pore may move independently. The polypeptide is Protein translocase subunit SecY (Haloarcula marismortui (strain ATCC 43049 / DSM 3752 / JCM 8966 / VKM B-1809) (Halobacterium marismortui)).